We begin with the raw amino-acid sequence, 535 residues long: GMP synthase [glutamine-hydrolyzing] (535 aa).

The Glutamine amidotransferase type-1 domain occupies 24–217; it reads KILIVDFGSQ…VRKVAGLKGD (194 aa). Cys101 functions as the Nucleophile in the catalytic mechanism. Active-site residues include His191 and Glu193. The 193-residue stretch at 218–410 folds into the GMPS ATP-PPase domain; that stretch reads WTMRAFREEA…LGLPEVFVGR (193 aa). Residue 245–251 participates in ATP binding; it reads SGGVDSA.

As to quaternary structure, homodimer.

It carries out the reaction XMP + L-glutamine + ATP + H2O = GMP + L-glutamate + AMP + diphosphate + 2 H(+). It functions in the pathway purine metabolism; GMP biosynthesis; GMP from XMP (L-Gln route): step 1/1. In terms of biological role, catalyzes the synthesis of GMP from XMP. The polypeptide is GMP synthase [glutamine-hydrolyzing] (Rhodopseudomonas palustris (strain BisB18)).